We begin with the raw amino-acid sequence, 104 residues long: uncharacterized protein (104 aa).

Residues 72-92 (LIFSHNIVIIVSPIYMISFII) traverse the membrane as a helical segment.

The protein localises to the membrane. This is an uncharacterized protein from Saccharomyces cerevisiae (strain ATCC 204508 / S288c) (Baker's yeast).